The chain runs to 267 residues: Indole-3-glycerol phosphate synthase (267 aa).

This sequence belongs to the TrpC family.

The catalysed reaction is 1-(2-carboxyphenylamino)-1-deoxy-D-ribulose 5-phosphate + H(+) = (1S,2R)-1-C-(indol-3-yl)glycerol 3-phosphate + CO2 + H2O. It participates in amino-acid biosynthesis; L-tryptophan biosynthesis; L-tryptophan from chorismate: step 4/5. The protein is Indole-3-glycerol phosphate synthase of Delftia acidovorans (strain DSM 14801 / SPH-1).